We begin with the raw amino-acid sequence, 299 residues long: 4-hydroxybenzoate octaprenyltransferase (299 aa).

7 helical membrane passes run 34-54 (IGSL…ADGL), 57-77 (LWTL…GCVI), 108-128 (LWVF…LNWL), 163-183 (WGIP…GWLL), 221-241 (FDLV…ALVD), 245-265 (DLGA…AYEF), and 277-297 (FRAF…IAVA).

Belongs to the UbiA prenyltransferase family. Mg(2+) is required as a cofactor.

The protein localises to the cell inner membrane. It catalyses the reaction all-trans-octaprenyl diphosphate + 4-hydroxybenzoate = 4-hydroxy-3-(all-trans-octaprenyl)benzoate + diphosphate. It functions in the pathway cofactor biosynthesis; ubiquinone biosynthesis. Catalyzes the prenylation of para-hydroxybenzoate (PHB) with an all-trans polyprenyl group. Mediates the second step in the final reaction sequence of ubiquinone-8 (UQ-8) biosynthesis, which is the condensation of the polyisoprenoid side chain with PHB, generating the first membrane-bound Q intermediate 3-octaprenyl-4-hydroxybenzoate. The chain is 4-hydroxybenzoate octaprenyltransferase from Xanthomonas oryzae pv. oryzae (strain MAFF 311018).